The chain runs to 1315 residues: Serine/threonine-protein kinase 36 (1315 aa).

The Protein kinase domain occupies 4 to 254 (YHVLEMIGEG…WPDLLYHPFI (251 aa)). Residues 10–18 (IGEGSFGRV) and Lys33 contribute to the ATP site. The active-site Proton acceptor is the Asp125. 2 disordered regions span residues 312 to 345 (EAMQKKHQNTGPALEQEDKTSKVAPGTAPLPRLG) and 365 to 405 (SWAE…RSTD). Positions 379 to 397 (RENRTTPDCERAFPEERPE) are enriched in basic and acidic residues.

This sequence belongs to the protein kinase superfamily. Ser/Thr protein kinase family. Interacts with SPAG16 and KIF27. The cofactor is Mg(2+).

It is found in the cytoplasm. Its subcellular location is the nucleus. It localises to the cytoskeleton. The protein resides in the cilium axoneme. The enzyme catalyses L-seryl-[protein] + ATP = O-phospho-L-seryl-[protein] + ADP + H(+). It catalyses the reaction L-threonyl-[protein] + ATP = O-phospho-L-threonyl-[protein] + ADP + H(+). Its function is as follows. Serine/threonine protein kinase which plays an important role in the sonic hedgehog (Shh) pathway by regulating the activity of GLI transcription factors. Controls the activity of the transcriptional regulators GLI1, GLI2 and GLI3 by opposing the effect of SUFU and promoting their nuclear localization. GLI2 requires an additional function of STK36 to become transcriptionally active, but the enzyme does not need to possess an active kinase catalytic site for this to occur. Required for postnatal development, possibly by regulating the homeostasis of cerebral spinal fluid or ciliary function. Essential for construction of the central pair apparatus of motile cilia. The polypeptide is Serine/threonine-protein kinase 36 (Pongo abelii (Sumatran orangutan)).